The chain runs to 473 residues: Pup--protein ligase (473 aa).

Glu9 contacts Mg(2+). Arg54 contacts ATP. Position 56 (Tyr56) interacts with Mg(2+). The Proton acceptor role is filled by Asp58. Residue Glu64 coordinates Mg(2+). The ATP site is built by Thr67 and Trp425.

It belongs to the Pup ligase/Pup deamidase family. Pup-conjugating enzyme subfamily.

The enzyme catalyses ATP + [prokaryotic ubiquitin-like protein]-L-glutamate + [protein]-L-lysine = ADP + phosphate + N(6)-([prokaryotic ubiquitin-like protein]-gamma-L-glutamyl)-[protein]-L-lysine.. The protein operates within protein degradation; proteasomal Pup-dependent pathway. Its pathway is protein modification; protein pupylation. In terms of biological role, catalyzes the covalent attachment of the prokaryotic ubiquitin-like protein modifier Pup to the proteasomal substrate proteins, thereby targeting them for proteasomal degradation. This tagging system is termed pupylation. The ligation reaction involves the side-chain carboxylate of the C-terminal glutamate of Pup and the side-chain amino group of a substrate lysine. The protein is Pup--protein ligase of Brachybacterium faecium (strain ATCC 43885 / DSM 4810 / JCM 11609 / LMG 19847 / NBRC 14762 / NCIMB 9860 / 6-10).